The primary structure comprises 221 residues: MGRFRGGLRCIKYLLLGFNLLFWLAGSAVIAFGLWFRFGGTIKDLSSEEKSPEYFYVGLYVLVGAGALMMAVGFFGCCGAMRESQCVLGSFFTCLLVIFAAEVTTGVFAFIGKDVAIRHVQSMYEEAYSDYVRDRGRGNGTLITFHSAFQCCGKESSEQVQPTCPKELPGHKNCIDKIETIISVKLQLIGIVGIGIAGLTIFGMIFSMVLCCAIRNSRDVI.

Residues 1–13 are Cytoplasmic-facing; that stretch reads MGRFRGGLRCIKY. A helical membrane pass occupies residues 14 to 34; sequence LLLGFNLLFWLAGSAVIAFGL. The Extracellular portion of the chain corresponds to 35 to 54; that stretch reads WFRFGGTIKDLSSEEKSPEY. The helical transmembrane segment at 55-75 threads the bilayer; that stretch reads FYVGLYVLVGAGALMMAVGFF. Residues 76–90 are Cytoplasmic-facing; the sequence is GCCGAMRESQCVLGS. A helical transmembrane segment spans residues 91-111; that stretch reads FFTCLLVIFAAEVTTGVFAFI. At 112–188 the chain is on the extracellular side; sequence GKDVAIRHVQ…ETIISVKLQL (77 aa). N-linked (GlcNAc...) asparagine glycosylation is present at Asn-139. Residues 189–209 form a helical membrane-spanning segment; that stretch reads IGIVGIGIAGLTIFGMIFSMV. The Cytoplasmic segment spans residues 210 to 221; sequence LCCAIRNSRDVI.

Belongs to the tetraspanin (TM4SF) family. Expression is restricted to the nervous system.

Its subcellular location is the membrane. May play a role in signalling in oligodendrocytes in the early stages of their terminal differentiation into myelin-forming glia and may also function in stabilizing the mature sheath. In Rattus norvegicus (Rat), this protein is Tetraspanin-2 (Tspan2).